Reading from the N-terminus, the 607-residue chain is Glycosyltransferase 25 family member (607 aa).

An N-terminal signal peptide occupies residues 1–22 (MKPVSCVGLLVLLVGVLVTVKG). N-linked (GlcNAc...) asparagine glycans are attached at residues asparagine 226, asparagine 254, asparagine 514, and asparagine 565. The segment at 566 to 607 (DTSDSSAEKKGDKEQLSSKTLMDSTISRDEHELSVANRKSEL) is disordered. Composition is skewed to basic and acidic residues over residues 571-581 (SAEKKGDKEQL) and 591-607 (ISRD…KSEL). The Prevents secretion from ER signature appears at 604–607 (KSEL).

It belongs to the glycosyltransferase 25 family.

Its subcellular location is the endoplasmic reticulum lumen. The chain is Glycosyltransferase 25 family member from Aedes aegypti (Yellowfever mosquito).